We begin with the raw amino-acid sequence, 337 residues long: ILSPFKFSRRATGDNDVRFKVLYCGVCHSDLHMVKNEWGMTTYPIVPGHEIVGRVTEVGSKVEKFKVGDAVGVGCLVGSCLSCENCDDDSENNCAKQVQTYAFTNVDGSITYGGYADSMVADQHFVLRWPENLPLDSGAPLLCAGITTYSPLRYHGLDKPGTKVGVVGLGGLGHVAVKMAKAFGAHVTVISTSESKKQEALEKLGADEFLVSSDSDQMQAATGTLHGIIDTVSALHPVVPLLGLLKVNGKLVMVGAPEKPLELPVFPLLMGRKVLAGSNIGGLKETQEMLDFAAQHNITADVEVIPVDYVNTAMERLVKSDVRYRFVIDVANTIKTE.

7 residues coordinate Zn(2+): Cys27, His49, Cys80, Cys83, Cys86, Cys94, and Cys143.

It belongs to the zinc-containing alcohol dehydrogenase family. It depends on Zn(2+) as a cofactor.

The enzyme catalyses D-mannitol + NAD(+) = D-mannose + NADH + H(+). Functionally, oxidizes mannitol to mannose. Provides the initial step by which translocated mannitol is committed to central metabolism and, by regulating mannitol pool size, is important in regulating salt tolerance at the cellular level. This chain is Mannitol dehydrogenase (ELI3), found in Petroselinum crispum (Parsley).